The sequence spans 180 residues: Inosine/xanthosine triphosphatase (180 aa).

8 to 13 (TTNPAK) is a binding site for substrate. Mg(2+) is bound by residues D38 and E68. 68–69 (EA) contributes to the substrate binding site.

This sequence belongs to the YjjX NTPase family. As to quaternary structure, homodimer. The cofactor is Mg(2+). Requires Mn(2+) as cofactor.

The enzyme catalyses XTP + H2O = XDP + phosphate + H(+). The catalysed reaction is ITP + H2O = IDP + phosphate + H(+). Its function is as follows. Phosphatase that hydrolyzes non-canonical purine nucleotides such as XTP and ITP to their respective diphosphate derivatives. Probably excludes non-canonical purines from DNA/RNA precursor pool, thus preventing their incorporation into DNA/RNA and avoiding chromosomal lesions. In Yersinia pestis bv. Antiqua (strain Antiqua), this protein is Inosine/xanthosine triphosphatase.